The following is a 337-amino-acid chain: tRNA N6-adenosine threonylcarbamoyltransferase (337 aa).

Residues His111 and His115 each contribute to the Fe cation site. Residues 134–138 (LVSGG), Asp167, Gly180, and Asn272 each bind substrate. Asp300 lines the Fe cation pocket.

Belongs to the KAE1 / TsaD family. Fe(2+) is required as a cofactor.

The protein resides in the cytoplasm. It carries out the reaction L-threonylcarbamoyladenylate + adenosine(37) in tRNA = N(6)-L-threonylcarbamoyladenosine(37) in tRNA + AMP + H(+). Functionally, required for the formation of a threonylcarbamoyl group on adenosine at position 37 (t(6)A37) in tRNAs that read codons beginning with adenine. Is involved in the transfer of the threonylcarbamoyl moiety of threonylcarbamoyl-AMP (TC-AMP) to the N6 group of A37, together with TsaE and TsaB. TsaD likely plays a direct catalytic role in this reaction. This Yersinia enterocolitica serotype O:8 / biotype 1B (strain NCTC 13174 / 8081) protein is tRNA N6-adenosine threonylcarbamoyltransferase.